Consider the following 543-residue polypeptide: Dipeptide-binding protein DppE (543 aa).

A signal peptide spans 1-22; that stretch reads MKRVKKLWGMGLALGLSFALMG. C23 carries N-palmitoyl cysteine lipidation. Residue C23 is the site of S-diacylglycerol cysteine attachment.

Belongs to the bacterial solute-binding protein 5 family.

Its subcellular location is the cell membrane. Its function is as follows. Probably part of the ABC transporter DppBCDE involved in dipeptide transport. This chain is Dipeptide-binding protein DppE (dppE), found in Bacillus subtilis (strain 168).